A 155-amino-acid polypeptide reads, in one-letter code: Ribosomal RNA large subunit methyltransferase H (155 aa).

S-adenosyl-L-methionine-binding positions include L72, G104, and 123–128 (LSKMTF).

It belongs to the RNA methyltransferase RlmH family. As to quaternary structure, homodimer.

The protein localises to the cytoplasm. The catalysed reaction is pseudouridine(1915) in 23S rRNA + S-adenosyl-L-methionine = N(3)-methylpseudouridine(1915) in 23S rRNA + S-adenosyl-L-homocysteine + H(+). Functionally, specifically methylates the pseudouridine at position 1915 (m3Psi1915) in 23S rRNA. The polypeptide is Ribosomal RNA large subunit methyltransferase H (Cytophaga hutchinsonii (strain ATCC 33406 / DSM 1761 / CIP 103989 / NBRC 15051 / NCIMB 9469 / D465)).